We begin with the raw amino-acid sequence, 95 residues long: Aspartyl/glutamyl-tRNA(Asn/Gln) amidotransferase subunit C (95 aa).

The protein belongs to the GatC family. In terms of assembly, heterotrimer of A, B and C subunits.

It carries out the reaction L-glutamyl-tRNA(Gln) + L-glutamine + ATP + H2O = L-glutaminyl-tRNA(Gln) + L-glutamate + ADP + phosphate + H(+). It catalyses the reaction L-aspartyl-tRNA(Asn) + L-glutamine + ATP + H2O = L-asparaginyl-tRNA(Asn) + L-glutamate + ADP + phosphate + 2 H(+). Allows the formation of correctly charged Asn-tRNA(Asn) or Gln-tRNA(Gln) through the transamidation of misacylated Asp-tRNA(Asn) or Glu-tRNA(Gln) in organisms which lack either or both of asparaginyl-tRNA or glutaminyl-tRNA synthetases. The reaction takes place in the presence of glutamine and ATP through an activated phospho-Asp-tRNA(Asn) or phospho-Glu-tRNA(Gln). This Campylobacter concisus (strain 13826) protein is Aspartyl/glutamyl-tRNA(Asn/Gln) amidotransferase subunit C.